Reading from the N-terminus, the 583-residue chain is MSELLSRIGSPSDVRALPEEALPLLCQELREDIISICGRVGGHLGASLGAVELIVALHRVFHSPQDALLFDVGHQTYAHKLLTGRRDRMHTLRHAGGIAPFLDPRESPHDALLAGHSCTAVSAALGVLEGRRQQGHRGHVVAVLGDGGLTGGLTFEGLNNAGGSSLPLVVVLNDNQMSISANVGAIPALLRTREARDFFEGLGFTYLGPVDGHDLPALIRALREARASSRPVVVHALTLKGKGFPPAEADTQTRGHAMGPYEWRDGKLVRSRGGQRTFSEAFAAVLEDAMARDPRVVAVTPAMLEGSALNALKARFPDRVHDVGIAEQHAVTFSAGLASAGARPVCCIYSTFLQRAYDQIIHDVCLPGLPVVFAVDRAGLVGADGATHQGTYDVASLRPLPDLHLWSPMVGEDLAPMLDTALAAPHASVIRFPRGTLPPLPEGLGAGEAPLRGARWLLRAEQPRLTLVTLGPLGIAALEAARGEPGWSVLDARCASPLDEAALLEAGRSGHVVVAEEGTTRGGLGSAVLELFAAHGLMARVRLMGMPDAFVPHGDARVQRAEQGLDAEGLRRAGLALLAGGGR.

Thiamine diphosphate contacts are provided by residues His-74 and 115 to 117 (GHS). Asp-146 is a Mg(2+) binding site. Residues 147-148 (GG), Asn-175, Phe-244, and Glu-327 each bind thiamine diphosphate. Residue Asn-175 coordinates Mg(2+).

Belongs to the transketolase family. DXPS subfamily. As to quaternary structure, homodimer. Mg(2+) serves as cofactor. Thiamine diphosphate is required as a cofactor.

It carries out the reaction D-glyceraldehyde 3-phosphate + pyruvate + H(+) = 1-deoxy-D-xylulose 5-phosphate + CO2. Its pathway is metabolic intermediate biosynthesis; 1-deoxy-D-xylulose 5-phosphate biosynthesis; 1-deoxy-D-xylulose 5-phosphate from D-glyceraldehyde 3-phosphate and pyruvate: step 1/1. Its function is as follows. Catalyzes the acyloin condensation reaction between C atoms 2 and 3 of pyruvate and glyceraldehyde 3-phosphate to yield 1-deoxy-D-xylulose-5-phosphate (DXP). In Myxococcus xanthus (strain DK1622), this protein is 1-deoxy-D-xylulose-5-phosphate synthase.